A 523-amino-acid polypeptide reads, in one-letter code: GMP synthase [glutamine-hydrolyzing] (523 aa).

The Glutamine amidotransferase type-1 domain maps to 8-205 (RILILDFGSQ…IRELCECEAL (198 aa)). Cysteine 85 (nucleophile) is an active-site residue. Catalysis depends on residues histidine 179 and glutamate 181. The 193-residue stretch at 206–398 (WTPSNIISDA…LGLPYDMVYR (193 aa)) folds into the GMPS ATP-PPase domain. 233–239 (SGGVDSS) serves as a coordination point for ATP.

Homodimer.

It carries out the reaction XMP + L-glutamine + ATP + H2O = GMP + L-glutamate + AMP + diphosphate + 2 H(+). The protein operates within purine metabolism; GMP biosynthesis; GMP from XMP (L-Gln route): step 1/1. Catalyzes the synthesis of GMP from XMP. The protein is GMP synthase [glutamine-hydrolyzing] of Alcanivorax borkumensis (strain ATCC 700651 / DSM 11573 / NCIMB 13689 / SK2).